We begin with the raw amino-acid sequence, 336 residues long: Biotin synthase (336 aa).

One can recognise a Radical SAM core domain in the interval 55–288; the sequence is GEAASLHACS…RTIIKFAAGR (234 aa). Residues cysteine 73, cysteine 77, and cysteine 80 each contribute to the [4Fe-4S] cluster site. 3 residues coordinate [2Fe-2S] cluster: cysteine 152, cysteine 213, and lysine 283.

Belongs to the radical SAM superfamily. Biotin synthase family. In terms of assembly, homodimer. The cofactor is [4Fe-4S] cluster. [2Fe-2S] cluster is required as a cofactor.

The catalysed reaction is (4R,5S)-dethiobiotin + (sulfur carrier)-SH + 2 reduced [2Fe-2S]-[ferredoxin] + 2 S-adenosyl-L-methionine = (sulfur carrier)-H + biotin + 2 5'-deoxyadenosine + 2 L-methionine + 2 oxidized [2Fe-2S]-[ferredoxin]. The protein operates within cofactor biosynthesis; biotin biosynthesis; biotin from 7,8-diaminononanoate: step 2/2. Functionally, catalyzes the conversion of dethiobiotin (DTB) to biotin by the insertion of a sulfur atom into dethiobiotin via a radical-based mechanism. In Chlorobium limicola (strain DSM 245 / NBRC 103803 / 6330), this protein is Biotin synthase.